The chain runs to 455 residues: SVGFKAGVKDYKLTYYTPDYETKDTDILAAFRVTPQPGVPPEEAGAEVAAESSTGTWTTVWTDGLTSLDRYKGRCYHIEPVAGEENQYIAYVAYPLDLFEEGSVTNMFTSIVGNVFGFKALRALRLEDLRIPTAYTKTFQGPPHGIQVERDKLNKYGRPLLGCTIKPKLGLSAKNYGRAVYECLRGGLDFTKDDENVNSQPFMRWRDRFLFCAEAIYKAQAETGEIKGHYLNATAGTWEEMIKRAVFARELGVPIVMHDYLTGGFTANTSLAHYCRDNGLLLHIHRAMHAVIDRQKNHGMHFRVLAKALRLSGGDHIHAGTVVGKLEGEREITLGFVDLLRDDFIEKDRSRGIYFTQDWVSLPGVLPVASGGIHVWHMPALTEIFGDDSVLQFGGGTLGHPWGNAPGAVANRVALEACVQARNEGRDLAREGNEIIREASKWSPELAAACEVWKE.

Lys-5 is modified (N6,N6,N6-trimethyllysine). Substrate contacts are provided by Asn-114 and Thr-164. Lys-166 serves as the catalytic Proton acceptor. Lys-168 is a substrate binding site. Mg(2+) is bound by residues Lys-192, Asp-194, and Glu-195. Position 192 is an N6-carboxylysine (Lys-192). The Proton acceptor role is filled by His-285. The substrate site is built by Arg-286, His-318, and Ser-370.

The protein belongs to the RuBisCO large chain family. Type I subfamily. As to quaternary structure, heterohexadecamer of 8 large chains and 8 small chains. The cofactor is Mg(2+).

The protein localises to the plastid. It localises to the chloroplast. The enzyme catalyses 2 (2R)-3-phosphoglycerate + 2 H(+) = D-ribulose 1,5-bisphosphate + CO2 + H2O. The catalysed reaction is D-ribulose 1,5-bisphosphate + O2 = 2-phosphoglycolate + (2R)-3-phosphoglycerate + 2 H(+). Functionally, ruBisCO catalyzes two reactions: the carboxylation of D-ribulose 1,5-bisphosphate, the primary event in carbon dioxide fixation, as well as the oxidative fragmentation of the pentose substrate in the photorespiration process. Both reactions occur simultaneously and in competition at the same active site. In Tamarindus indica (Tamarind), this protein is Ribulose bisphosphate carboxylase large chain.